A 602-amino-acid chain; its full sequence is Elongation factor 4 (602 aa).

The tr-type G domain maps to 2 to 184; the sequence is NHIRNFSIIA…AVVAKVPPPK (183 aa). GTP contacts are provided by residues 14-19 and 131-134; these read DHGKST and NKMD.

This sequence belongs to the TRAFAC class translation factor GTPase superfamily. Classic translation factor GTPase family. LepA subfamily.

It is found in the cell inner membrane. The catalysed reaction is GTP + H2O = GDP + phosphate + H(+). Functionally, required for accurate and efficient protein synthesis under certain stress conditions. May act as a fidelity factor of the translation reaction, by catalyzing a one-codon backward translocation of tRNAs on improperly translocated ribosomes. Back-translocation proceeds from a post-translocation (POST) complex to a pre-translocation (PRE) complex, thus giving elongation factor G a second chance to translocate the tRNAs correctly. Binds to ribosomes in a GTP-dependent manner. This chain is Elongation factor 4, found in Delftia acidovorans (strain DSM 14801 / SPH-1).